We begin with the raw amino-acid sequence, 493 residues long: 3-octaprenyl-4-hydroxybenzoate carboxy-lyase (493 aa).

A Mn(2+)-binding site is contributed by Asn172. Prenylated FMN contacts are provided by residues 175-177 (IYR), 189-191 (RWL), and 194-195 (RG). Glu238 provides a ligand contact to Mn(2+). Asp287 acts as the Proton donor in catalysis.

It belongs to the UbiD family. As to quaternary structure, homohexamer. Prenylated FMN is required as a cofactor. It depends on Mn(2+) as a cofactor.

The protein resides in the cell membrane. The enzyme catalyses a 4-hydroxy-3-(all-trans-polyprenyl)benzoate + H(+) = a 2-(all-trans-polyprenyl)phenol + CO2. It functions in the pathway cofactor biosynthesis; ubiquinone biosynthesis. In terms of biological role, catalyzes the decarboxylation of 3-octaprenyl-4-hydroxy benzoate to 2-octaprenylphenol, an intermediate step in ubiquinone biosynthesis. The sequence is that of 3-octaprenyl-4-hydroxybenzoate carboxy-lyase from Shewanella frigidimarina (strain NCIMB 400).